We begin with the raw amino-acid sequence, 375 residues long: Chaperone protein DnaJ (375 aa).

One can recognise a J domain in the interval 5–70 (DFYEVLGVEK…QKRAQYDQFG (66 aa)). Residues 134 to 216 (GVEKEVSITK…CKGKGTVRKQ (83 aa)) form a CR-type zinc finger. Positions 147, 150, 164, 167, 190, 193, 204, and 207 each coordinate Zn(2+). CXXCXGXG motif repeat units lie at residues 147 to 154 (CETCTGTG), 164 to 171 (CPKCNGSG), 190 to 197 (CDMCGGKG), and 204 to 211 (CSDCKGKG).

The protein belongs to the DnaJ family. In terms of assembly, homodimer. Zn(2+) serves as cofactor.

The protein resides in the cytoplasm. Its function is as follows. Participates actively in the response to hyperosmotic and heat shock by preventing the aggregation of stress-denatured proteins and by disaggregating proteins, also in an autonomous, DnaK-independent fashion. Unfolded proteins bind initially to DnaJ; upon interaction with the DnaJ-bound protein, DnaK hydrolyzes its bound ATP, resulting in the formation of a stable complex. GrpE releases ADP from DnaK; ATP binding to DnaK triggers the release of the substrate protein, thus completing the reaction cycle. Several rounds of ATP-dependent interactions between DnaJ, DnaK and GrpE are required for fully efficient folding. Also involved, together with DnaK and GrpE, in the DNA replication of plasmids through activation of initiation proteins. The chain is Chaperone protein DnaJ from Clostridium tetani (strain Massachusetts / E88).